The sequence spans 481 residues: Proline--tRNA ligase (481 aa).

It belongs to the class-II aminoacyl-tRNA synthetase family. ProS type 3 subfamily. As to quaternary structure, homodimer.

The protein resides in the cytoplasm. The catalysed reaction is tRNA(Pro) + L-proline + ATP = L-prolyl-tRNA(Pro) + AMP + diphosphate. Functionally, catalyzes the attachment of proline to tRNA(Pro) in a two-step reaction: proline is first activated by ATP to form Pro-AMP and then transferred to the acceptor end of tRNA(Pro). This chain is Proline--tRNA ligase, found in Saccharolobus islandicus (strain M.16.27) (Sulfolobus islandicus).